The following is a 596-amino-acid chain: Choline dehydrogenase, mitochondrial (596 aa).

A mitochondrion-targeting transit peptide spans 1-34 (MWQVLRGWRKGWQSPRGALAWAVQGQPCPPCSRA). 44 to 73 (TFVVVGAGSAGCVLASRLTEDPNHRVLLLE) lines the FAD pocket. N6-succinyllysine is present on Lys-438. N6-acetyllysine; alternate occurs at positions 486 and 498. 2 positions are modified to N6-succinyllysine; alternate: Lys-486 and Lys-498. The active-site Proton acceptor is the His-513. Lys-582 is subject to N6-acetyllysine.

This sequence belongs to the GMC oxidoreductase family. It depends on FAD as a cofactor. Acetylation of Lys-498 is observed in liver mitochondria from fasted mice but not from fed mice.

It is found in the mitochondrion inner membrane. It catalyses the reaction choline + A = betaine aldehyde + AH2. It functions in the pathway amine and polyamine biosynthesis; betaine biosynthesis via choline pathway; betaine aldehyde from choline (cytochrome c reductase route): step 1/1. In Mus musculus (Mouse), this protein is Choline dehydrogenase, mitochondrial (Chdh).